Here is a 442-residue protein sequence, read N- to C-terminus: MLSDTICAIASGQINQAISIIRISGPNAFKIMEKIFLGKVGKSMEITFGWIHDDNQKIDQVLVLWFAGNKNFVGEDTVEINAHGGVLNTNLILELILKTKLARLANPGEFSLRAFLNGKIDLVKAQAINDLIHAEVKVQHQAALNQFLGKSSNFIKNLIEKIEEIIGIIEVNIDYPEYDDVEILTSDVLLPRINQLLADFDQLIKIANNSRLIYQGIKTCLVGAPNSGKSSLLNILINENKAIISEIPGTTRDVVEGNFVLDGLLFKLFDTAGIRKTTEKIEQIGIEKSYESIKKADLILHIIDASEKNRQNLDLKAKTRPDQIYLKIYNKSDLLENQEEFKDEILISAKYQKIENLLEKIKSIFAFLGKNKEFVANSFQISQIELGKLAILDAKTSLESGFGPEIAIVDLRIAWKELKTIFGRVDDENLLDSIFSKFCLGK.

The (6S)-5-formyl-5,6,7,8-tetrahydrofolate site is built by arginine 22, glutamate 79, and lysine 119. A TrmE-type G domain is found at 216–366 (GIKTCLVGAP…LLEKIKSIFA (151 aa)). Position 226 (asparagine 226) interacts with K(+). Residues 226–231 (NSGKSS), 245–251 (SEIPGTT), and 270–273 (DTAG) contribute to the GTP site. Residue serine 230 coordinates Mg(2+). 3 residues coordinate K(+): serine 245, isoleucine 247, and threonine 250. Mg(2+) is bound at residue threonine 251. Lysine 442 is a (6S)-5-formyl-5,6,7,8-tetrahydrofolate binding site.

Belongs to the TRAFAC class TrmE-Era-EngA-EngB-Septin-like GTPase superfamily. TrmE GTPase family. Homodimer. Heterotetramer of two MnmE and two MnmG subunits. The cofactor is K(+).

Its subcellular location is the cytoplasm. In terms of biological role, exhibits a very high intrinsic GTPase hydrolysis rate. Involved in the addition of a carboxymethylaminomethyl (cmnm) group at the wobble position (U34) of certain tRNAs, forming tRNA-cmnm(5)s(2)U34. In Mesomycoplasma hyopneumoniae (strain 232) (Mycoplasma hyopneumoniae), this protein is tRNA modification GTPase MnmE.